The following is a 262-amino-acid chain: E3 ubiquitin-protein ligase NEURL3 (262 aa).

In terms of domain architecture, NHR spans 17–173; that stretch reads ALRFHAEAKG…TTKAIELLDP (157 aa). An RING-type zinc finger spans residues 202 to 241; sequence CAICFYHAANTRLVPCGHTYFCRYCAWRVFSDTAKCPVCR.

(Microbial infection) Interacts with hepatitis C virus protein E1; this interaction prevents E1 interaction with E2 and subsequently inhibits viral infection.

Its subcellular location is the cytoplasm. The enzyme catalyses S-ubiquitinyl-[E2 ubiquitin-conjugating enzyme]-L-cysteine + [acceptor protein]-L-lysine = [E2 ubiquitin-conjugating enzyme]-L-cysteine + N(6)-ubiquitinyl-[acceptor protein]-L-lysine.. It functions in the pathway protein modification; protein ubiquitination. Its function is as follows. E3 ubiquitin-protein ligase that plays a role in various biological processes such as lung development or innate immunity. Seems to utilize UBE2E1. Promotes innate antiviral response by catalyzing 'Lys-63'-linked ubiquitination of IRF7. Also inhibits hepatitis C virus assembly by directly binding to viral E1 envelope glycoprotein to disrupt its interaction with E2. Plays an essential role in TLR4-mediated activation of MAPK pathways by promoting 'Lys-48'-linked polyubiquitination of the phosphatase DUSP1/MKP1. The protein is E3 ubiquitin-protein ligase NEURL3 (NEURL3) of Homo sapiens (Human).